The primary structure comprises 285 residues: NAD kinase (285 aa).

Catalysis depends on Asp68, which acts as the Proton acceptor. NAD(+)-binding positions include 68 to 69 (DG), 142 to 143 (ND), Arg153, Arg170, Asp172, and Gln242.

The protein belongs to the NAD kinase family. A divalent metal cation is required as a cofactor.

The protein localises to the cytoplasm. It catalyses the reaction NAD(+) + ATP = ADP + NADP(+) + H(+). Involved in the regulation of the intracellular balance of NAD and NADP, and is a key enzyme in the biosynthesis of NADP. Catalyzes specifically the phosphorylation on 2'-hydroxyl of the adenosine moiety of NAD to yield NADP. The polypeptide is NAD kinase (Acidobacterium capsulatum (strain ATCC 51196 / DSM 11244 / BCRC 80197 / JCM 7670 / NBRC 15755 / NCIMB 13165 / 161)).